We begin with the raw amino-acid sequence, 160 residues long: Transcription antitermination protein NusB (160 aa).

Belongs to the NusB family.

Functionally, involved in transcription antitermination. Required for transcription of ribosomal RNA (rRNA) genes. Binds specifically to the boxA antiterminator sequence of the ribosomal RNA (rrn) operons. This chain is Transcription antitermination protein NusB, found in Nitrobacter hamburgensis (strain DSM 10229 / NCIMB 13809 / X14).